The following is a 506-amino-acid chain: DNA nucleotidylexotransferase (506 aa).

Positions 11-17 (SQRKRQK) match the Nuclear localization signal motif. Residues 27-124 (GYEIKFNKLV…RPVDLEKKYH (98 aa)) enclose the BRCT domain. Residues 258–262 (VGVKT) are involved in DNA binding. A 2'-deoxyribonucleoside 5'-triphosphate-binding positions include 333–338 (GFRRGK) and 342–345 (HDID). Residues aspartate 343, aspartate 345, and aspartate 430 each contribute to the Mg(2+) site. A 2'-deoxyribonucleoside 5'-triphosphate is bound at residue 445–446 (GW).

This sequence belongs to the DNA polymerase type-X family. It depends on Mg(2+) as a cofactor.

It localises to the nucleus. It catalyses the reaction DNA(n) + a 2'-deoxyribonucleoside 5'-triphosphate = DNA(n+1) + diphosphate. Template-independent DNA polymerase which catalyzes the random addition of deoxynucleoside 5'-triphosphate to the 3'-end of a DNA initiator. One of the in vivo functions of this enzyme is the addition of nucleotides at the junction (N region) of rearranged Ig heavy chain and T-cell receptor gene segments during the maturation of B- and T-cells. This Gallus gallus (Chicken) protein is DNA nucleotidylexotransferase (DNTT).